A 316-amino-acid polypeptide reads, in one-letter code: N-acetyl-gamma-glutamyl-phosphate reductase (316 aa).

The active site involves Cys-136.

It belongs to the NAGSA dehydrogenase family. Type 1 subfamily.

It is found in the cytoplasm. It carries out the reaction N-acetyl-L-glutamate 5-semialdehyde + phosphate + NADP(+) = N-acetyl-L-glutamyl 5-phosphate + NADPH + H(+). It participates in amino-acid biosynthesis; L-arginine biosynthesis; N(2)-acetyl-L-ornithine from L-glutamate: step 3/4. Its function is as follows. Catalyzes the NADPH-dependent reduction of N-acetyl-5-glutamyl phosphate to yield N-acetyl-L-glutamate 5-semialdehyde. This Xanthomonas oryzae pv. oryzae (strain MAFF 311018) protein is N-acetyl-gamma-glutamyl-phosphate reductase.